The primary structure comprises 292 residues: Beta-lactamase-like protein 2 homolog (292 aa).

Residues His76, His78, Asp80, His81, His145, Asp163, and His198 each coordinate Zn(2+).

This sequence belongs to the metallo-beta-lactamase superfamily. Glyoxalase II family.

The protein is Beta-lactamase-like protein 2 homolog of Drosophila melanogaster (Fruit fly).